A 128-amino-acid chain; its full sequence is Fluoride-specific ion channel FluC (128 aa).

4 consecutive transmembrane segments (helical) span residues 8-28 (IIFI…LGLL), 38-58 (LGTL…LAFF), 71-91 (FFVT…AEVI), and 103-123 (LMLA…GVFI). Na(+) is bound by residues Gly-78 and Thr-81.

This sequence belongs to the fluoride channel Fluc/FEX (TC 1.A.43) family.

It localises to the cell inner membrane. The enzyme catalyses fluoride(in) = fluoride(out). With respect to regulation, na(+) is not transported, but it plays an essential structural role and its presence is essential for fluoride channel function. In terms of biological role, fluoride-specific ion channel. Important for reducing fluoride concentration in the cell, thus reducing its toxicity. The sequence is that of Fluoride-specific ion channel FluC from Pasteurella multocida (strain Pm70).